The primary structure comprises 314 residues: Acetaldehyde dehydrogenase (314 aa).

Residue 15–18 coordinates NAD(+); that stretch reads SGNI. The active-site Acyl-thioester intermediate is C133. NAD(+) contacts are provided by residues 164-172 and N292; that span reads SAGPGTRAN.

It belongs to the acetaldehyde dehydrogenase family.

It carries out the reaction acetaldehyde + NAD(+) + CoA = acetyl-CoA + NADH + H(+). The protein is Acetaldehyde dehydrogenase of Paraburkholderia phytofirmans (strain DSM 17436 / LMG 22146 / PsJN) (Burkholderia phytofirmans).